The primary structure comprises 74 residues: Large ribosomal subunit protein bL31 (74 aa).

Positions 16, 18, 38, and 41 each coordinate Zn(2+).

This sequence belongs to the bacterial ribosomal protein bL31 family. Type A subfamily. As to quaternary structure, part of the 50S ribosomal subunit. It depends on Zn(2+) as a cofactor.

Binds the 23S rRNA. This chain is Large ribosomal subunit protein bL31 (rpmE), found in Streptomyces coelicolor (strain ATCC BAA-471 / A3(2) / M145).